A 147-amino-acid chain; its full sequence is Hemoglobin subunit beta-2 (147 aa).

Residues 3–147 (HWTAEEKATI…LVAALSHGYF (145 aa)) enclose the Globin domain. Heme b contacts are provided by H64 and H93.

This sequence belongs to the globin family. Heterotetramer of two alpha chains and two beta chains. In terms of tissue distribution, red blood cells.

In terms of biological role, this is a larval (tadpole) beta-globin. This is Hemoglobin subunit beta-2 (hbb2) from Xenopus tropicalis (Western clawed frog).